The following is a 526-amino-acid chain: Sugar transport protein 13 (526 aa).

The Cytoplasmic segment spans residues 1-18 (MTGGGFATSANGVEFEAK). The helical transmembrane segment at 19 to 39 (ITPIVIISCIMAATGGLMFGY) threads the bilayer. At 40–81 (DVGVSGGVTSMPDFLEKFFPVVYRKVVAGADKDSNYCKYDNQ) the chain is on the extracellular side. The helical transmembrane segment at 82–102 (GLQLFTSSLYLAGLTATFFAS) threads the bilayer. Residues 103–111 (YTTRTLGRR) lie on the Cytoplasmic side of the membrane. A helical transmembrane segment spans residues 112–132 (LTMLIAGVFFIIGVALNAGAQ). Topologically, residues 133–141 (DLAMLIAGR) are extracellular. The helical transmembrane segment at 142–162 (ILLGCGVGFANQAVPLFLSEI) threads the bilayer. Residues 163-168 (APTRIR) are Cytoplasmic-facing. The chain crosses the membrane as a helical span at residues 169–189 (GGLNILFQLNVTIGILFANLV). Residues 190–203 (NYGTAKIKGGWGWR) lie on the Extracellular side of the membrane. Residues 204–224 (LSLGLAGIPALLLTVGALLVT) form a helical membrane-spanning segment. Residues 225–296 (ETPNSLVERG…IAVALQIFQQ (72 aa)) are Cytoplasmic-facing. A helical membrane pass occupies residues 297-317 (CTGINAIMFYAPVLFSTLGFG). Residues 318–319 (SD) lie on the Extracellular side of the membrane. A helical membrane pass occupies residues 320 to 340 (ASLYSAVVTGAVNVLSTLVSI). The Cytoplasmic portion of the chain corresponds to 341–349 (YSVDKVGRR). Residues 350–370 (VLLLEAGVQMFFSQVVIAIIL) form a helical membrane-spanning segment. The Extracellular segment spans residues 371-383 (GVKVTDTSTNLSK). A helical membrane pass occupies residues 384-404 (GFAILVVVMICTYVAAFAWSW). Over 405–426 (GPLGWLIPSETFPLETRSAGQS) the chain is Cytoplasmic. Residues 427-447 (VTVCVNLLFTFIIAQAFLSML) form a helical membrane-spanning segment. Residues 448–451 (CHFK) lie on the Extracellular side of the membrane. Residues 452–472 (FGIFIFFSAWVLIMSVFVMFL) form a helical membrane-spanning segment. Over 473–526 (LPETKNIPIEEMTERVWKKHWFWARFMDDHNDHEFVNGEKSNGKSNGFDPSTRL) the chain is Cytoplasmic.

It belongs to the major facilitator superfamily. Sugar transporter (TC 2.A.1.1) family.

It localises to the cell membrane. Functionally, mediates an active uptake of hexoses, probably by sugar/hydrogen symport. The polypeptide is Sugar transport protein 13 (STP13) (Arabidopsis thaliana (Mouse-ear cress)).